The following is a 278-amino-acid chain: Large ribosomal subunit protein uL2 (278 aa).

Residues 222-278 (GVVMNPIDHPHGGGEGRTSGGRHPVTPWGKPTKGKKTRSNKSTNKFILISRHKRKKK) form a disordered region.

This sequence belongs to the universal ribosomal protein uL2 family. As to quaternary structure, part of the 50S ribosomal subunit. Forms a bridge to the 30S subunit in the 70S ribosome.

In terms of biological role, one of the primary rRNA binding proteins. Required for association of the 30S and 50S subunits to form the 70S ribosome, for tRNA binding and peptide bond formation. It has been suggested to have peptidyltransferase activity; this is somewhat controversial. Makes several contacts with the 16S rRNA in the 70S ribosome. In Afipia carboxidovorans (strain ATCC 49405 / DSM 1227 / KCTC 32145 / OM5) (Oligotropha carboxidovorans), this protein is Large ribosomal subunit protein uL2.